A 524-amino-acid polypeptide reads, in one-letter code: Phosphoenolpyruvate carboxykinase (ATP) (524 aa).

Positions 52, 188, and 194 each coordinate substrate. Residues K194, H213, and 229–237 (GLSGTGKTT) each bind ATP. Mn(2+) is bound by residues K194 and H213. D250 contributes to the Mn(2+) binding site. Positions 278, 314, and 439 each coordinate ATP. Residue R314 coordinates substrate.

The protein belongs to the phosphoenolpyruvate carboxykinase (ATP) family. Mn(2+) serves as cofactor.

It is found in the cytoplasm. It carries out the reaction oxaloacetate + ATP = phosphoenolpyruvate + ADP + CO2. The protein operates within carbohydrate biosynthesis; gluconeogenesis. Functionally, involved in the gluconeogenesis. Catalyzes the conversion of oxaloacetate (OAA) to phosphoenolpyruvate (PEP) through direct phosphoryl transfer between the nucleoside triphosphate and OAA. This Campylobacter jejuni (strain RM1221) protein is Phosphoenolpyruvate carboxykinase (ATP).